Reading from the N-terminus, the 185-residue chain is Peptidyl-tRNA hydrolase (185 aa).

Y14 lines the tRNA pocket. H19 serves as the catalytic Proton acceptor. TRNA contacts are provided by F64, N66, and N112.

Belongs to the PTH family. Monomer.

Its subcellular location is the cytoplasm. The catalysed reaction is an N-acyl-L-alpha-aminoacyl-tRNA + H2O = an N-acyl-L-amino acid + a tRNA + H(+). In terms of biological role, hydrolyzes ribosome-free peptidyl-tRNAs (with 1 or more amino acids incorporated), which drop off the ribosome during protein synthesis, or as a result of ribosome stalling. Its function is as follows. Catalyzes the release of premature peptidyl moieties from peptidyl-tRNA molecules trapped in stalled 50S ribosomal subunits, and thus maintains levels of free tRNAs and 50S ribosomes. This Latilactobacillus sakei subsp. sakei (strain 23K) (Lactobacillus sakei subsp. sakei) protein is Peptidyl-tRNA hydrolase.